A 123-amino-acid chain; its full sequence is Ribonuclease P protein component (123 aa).

The protein belongs to the RnpA family. Consists of a catalytic RNA component (M1 or rnpB) and a protein subunit.

It catalyses the reaction Endonucleolytic cleavage of RNA, removing 5'-extranucleotides from tRNA precursor.. RNaseP catalyzes the removal of the 5'-leader sequence from pre-tRNA to produce the mature 5'-terminus. It can also cleave other RNA substrates such as 4.5S RNA. The protein component plays an auxiliary but essential role in vivo by binding to the 5'-leader sequence and broadening the substrate specificity of the ribozyme. This is Ribonuclease P protein component from Bordetella bronchiseptica (strain ATCC BAA-588 / NCTC 13252 / RB50) (Alcaligenes bronchisepticus).